Here is a 227-residue protein sequence, read N- to C-terminus: MRTGLIAKKLGMTRLFKEDGTHVPVTVLHVDNLQVVDVRTQDRDGYTAVQLGFGNAKVKNVSKPNRGHFARVKVEPKKKLAEFRVADDAVLEAGATLSAAHFVVGQKVDVTSTSKGKGFAGAMKRWNFAGLEASHGVSISHRSHGSTGNRQDPGKTFKNKKMAGHLGSERVTTLNLEVAAVDAEKNLLMVRGSVPGGKNELVLVRDAIKKARHAEAPYPAALVAAAG.

Gln-151 bears the N5-methylglutamine mark.

The protein belongs to the universal ribosomal protein uL3 family. As to quaternary structure, part of the 50S ribosomal subunit. Forms a cluster with proteins L14 and L19. In terms of processing, methylated by PrmB.

One of the primary rRNA binding proteins, it binds directly near the 3'-end of the 23S rRNA, where it nucleates assembly of the 50S subunit. The polypeptide is Large ribosomal subunit protein uL3 (Gluconacetobacter diazotrophicus (strain ATCC 49037 / DSM 5601 / CCUG 37298 / CIP 103539 / LMG 7603 / PAl5)).